Reading from the N-terminus, the 295-residue chain is Small ribosomal subunit protein uS2B (295 aa).

At Ser2 the chain carries N-acetylserine. Positions 54–113 (TWEKLLLAARAIVAIENPADVSVISSRNTGQRAVLKFAAATGATPIAGRFTPGTFTNQIQ) are interaction with PPP1R16B. Laminin-binding stretches follow at residues 161-180 (IPCN…MLAR) and 205-229 (RDPE…EFQG). Over residues 218 to 227 (AEKAVTKEEF) the composition is skewed to basic and acidic residues. The disordered stretch occupies residues 218–242 (AEKAVTKEEFQGEWTAPSPEFTATQ). [DE]-W-[ST] repeat units lie at residues 230 to 232 (EWT), 247 to 249 (DWS), 266 to 268 (DWS), 275 to 277 (DWS), and 293 to 295 (DWS). The interval 242–295 (QPEVADWSEGVQVPSVPIQQFPTEDWSAQPATEDWSAAPTAQATEWVGATTDWS) is laminin-binding. Residues 266-295 (DWSAQPATEDWSAAPTAQATEWVGATTDWS) form a disordered region.

It belongs to the universal ribosomal protein uS2 family. As to quaternary structure, monomer (37LRP) and homodimer (67LR). Component of the small ribosomal subunit. Mature ribosomes consist of a small (40S) and a large (60S) subunit. The 40S subunit contains about 33 different proteins and 1 molecule of RNA (18S). The 60S subunit contains about 49 different proteins and 3 molecules of RNA (28S, 5.8S and 5S). Interacts with RPS21. Interacts with several laminins including at least LAMB1. Interacts with MDK. The mature dimeric form interacts with PPP1R16B (via its fourth ankyrin repeat). Interacts with PPP1CA only in the presence of PPP1R16B. Post-translationally, acylated. Acylation may be a prerequisite for conversion of the monomeric 37 kDa laminin receptor precursor (37LRP) to the mature dimeric 67 kDa laminin receptor (67LR), and may provide a mechanism for membrane association. In terms of processing, cleaved by stromelysin-3 (ST3) at the cell surface. Cleavage by stromelysin-3 may be a mechanism to alter cell-extracellular matrix interactions.

Its subcellular location is the cell membrane. The protein localises to the cytoplasm. It localises to the nucleus. In terms of biological role, required for the assembly and/or stability of the 40S ribosomal subunit. Required for the processing of the 20S rRNA-precursor to mature 18S rRNA in a late step of the maturation of 40S ribosomal subunits. Also functions as a cell surface receptor for laminin. Plays a role in cell adhesion to the basement membrane and in the consequent activation of signaling transduction pathways. May play a role in cell fate determination and tissue morphogenesis. Also acts as a receptor for several other ligands, including the pathogenic prion protein, viruses, and bacteria. Acts as a PPP1R16B-dependent substrate of PPP1CA. The chain is Small ribosomal subunit protein uS2B from Homo sapiens (Human).